Consider the following 140-residue polypeptide: Organic hydroperoxide resistance protein-like (140 aa).

This sequence belongs to the OsmC/Ohr family.

This chain is Organic hydroperoxide resistance protein-like, found in Mycoplasma pneumoniae (strain ATCC 29342 / M129 / Subtype 1) (Mycoplasmoides pneumoniae).